Consider the following 382-residue polypeptide: Protein RecA (382 aa).

79-86 is a binding site for ATP; the sequence is GPESSGKT. Positions 362–382 are disordered; that stretch reads ATKSAAKGSEVQADVKTKGAA.

This sequence belongs to the RecA family.

The protein resides in the cytoplasm. Functionally, can catalyze the hydrolysis of ATP in the presence of single-stranded DNA, the ATP-dependent uptake of single-stranded DNA by duplex DNA, and the ATP-dependent hybridization of homologous single-stranded DNAs. It interacts with LexA causing its activation and leading to its autocatalytic cleavage. This is Protein RecA from Synechococcus sp. (strain WH7803).